A 494-amino-acid polypeptide reads, in one-letter code: Putative transporter SVOPL (494 aa).

10 consecutive transmembrane segments (helical) span residues 48–68 (IALF…IMLI), 86–106 (VAFV…LFGL), 121–141 (FLWG…IWFV), 179–199 (VFWL…IPTI), 203–223 (WLIR…KFIP), 281–301 (TLQI…VILA), 350–370 (IIST…INFL), 385–405 (LFFL…FLFM), 431–451 (AIGM…APFI), and 460–480 (FLGA…SAFT).

The protein belongs to the major facilitator superfamily.

The protein localises to the membrane. This is Putative transporter SVOPL (Svopl) from Mus musculus (Mouse).